A 128-amino-acid chain; its full sequence is 3-aminoacrylate deaminase RutC (128 aa).

This sequence belongs to the RutC family.

The catalysed reaction is (Z)-3-aminoacrylate + H2O + H(+) = 3-oxopropanoate + NH4(+). Involved in pyrimidine catabolism. Catalyzes the deamination of 3-aminoacrylate to malonic semialdehyde, a reaction that can also occur spontaneously. RutC may facilitate the reaction and modulate the metabolic fitness, rather than catalyzing essential functions. The polypeptide is 3-aminoacrylate deaminase RutC (Enterobacter cloacae subsp. cloacae (strain ATCC 13047 / DSM 30054 / NBRC 13535 / NCTC 10005 / WDCM 00083 / NCDC 279-56)).